We begin with the raw amino-acid sequence, 168 residues long: tRNA (cytidine(56)-2'-O)-methyltransferase (168 aa).

Residues L79 and 104–108 (GAEKV) contribute to the S-adenosyl-L-methionine site.

The protein belongs to the aTrm56 family. Homodimer.

The protein localises to the cytoplasm. The catalysed reaction is cytidine(56) in tRNA + S-adenosyl-L-methionine = 2'-O-methylcytidine(56) in tRNA + S-adenosyl-L-homocysteine + H(+). In terms of biological role, specifically catalyzes the AdoMet-dependent 2'-O-ribose methylation of cytidine at position 56 in tRNAs. This chain is tRNA (cytidine(56)-2'-O)-methyltransferase, found in Archaeoglobus fulgidus (strain ATCC 49558 / DSM 4304 / JCM 9628 / NBRC 100126 / VC-16).